The primary structure comprises 242 residues: Zinc-finger homeodomain protein 13 (242 aa).

The segment at 64–111 adopts a ZF-HD dimerization-type; degenerate zinc-finger fold; sequence YYECRKNHAADIGTTAYDGCGEFVSSTGEEDSLNCAACGCHRNFHREE. The tract at residues 144–166 is disordered; that stretch reads GGKSEGKKKKKEKESYGGDPIIK. The segment covering 155–166 has biased composition (basic and acidic residues); the sequence is EKESYGGDPIIK. The homeobox DNA-binding region spans 179 to 238; the sequence is VKRLKTKFTAEQTEKMRDYAEKLRWKVRPERQEEVEEFCVEIGVNRKNFRIWMNNHKDKI.

Homo- and heterodimer with other ZFHD proteins. Interacts with MIF1, MIF2 and MIF3; these interactions prevent nuclear localization and DNA-binding to inhibit transcription regulation activity. Binds to ZHD11. Mostly expressed in flowers.

The protein resides in the nucleus. Putative transcription factor. The chain is Zinc-finger homeodomain protein 13 (ZHD13) from Arabidopsis thaliana (Mouse-ear cress).